An 818-amino-acid polypeptide reads, in one-letter code: Probable helicase MAGATAMA 3 (818 aa).

In terms of domain architecture, UvrD-like helicase ATP-binding spans 259–559 (NKSQKEAIDV…KMLKTQYRMH (301 aa)). 280-287 (GPPGTGKT) lines the ATP pocket. 2 stretches are compositionally biased toward acidic residues: residues 781 to 790 (PDAPLYEDES) and 798 to 818 (GDDDFGDGDADQDDVAMAGED). The tract at residues 781-818 (PDAPLYEDESLPVAPYGGDDDFGDGDADQDDVAMAGED) is disordered.

The protein belongs to the helicase family. Expressed in flowers, siliques, leaves, roots and shoot apex.

The protein resides in the nucleus. In terms of biological role, probable helicase that may regulate RNA molecules involved in nucleolar organization and pollen tube guidance. The chain is Probable helicase MAGATAMA 3 (MAA3) from Arabidopsis thaliana (Mouse-ear cress).